We begin with the raw amino-acid sequence, 250 residues long: Uracil-DNA glycosylase (250 aa).

The active-site Proton acceptor is D78.

This sequence belongs to the uracil-DNA glycosylase (UDG) superfamily. UNG family.

Its subcellular location is the cytoplasm. The catalysed reaction is Hydrolyzes single-stranded DNA or mismatched double-stranded DNA and polynucleotides, releasing free uracil.. Its function is as follows. Excises uracil residues from the DNA which can arise as a result of misincorporation of dUMP residues by DNA polymerase or due to deamination of cytosine. This is Uracil-DNA glycosylase from Albidiferax ferrireducens (strain ATCC BAA-621 / DSM 15236 / T118) (Rhodoferax ferrireducens).